Here is a 383-residue protein sequence, read N- to C-terminus: Queuine tRNA-ribosyltransferase (383 aa).

Catalysis depends on Asp92, which acts as the Proton acceptor. Residues 92–96 (DSGGF), Asp146, Gln190, and Gly217 each bind substrate. The tract at residues 248–254 (GVGKPED) is RNA binding. Catalysis depends on Asp267, which acts as the Nucleophile. An RNA binding; important for wobble base 34 recognition region spans residues 272–276 (TRNAR). The Zn(2+) site is built by Cys310, Cys312, Cys315, and His341.

The protein belongs to the queuine tRNA-ribosyltransferase family. In terms of assembly, homodimer. Within each dimer, one monomer is responsible for RNA recognition and catalysis, while the other monomer binds to the replacement base PreQ1. The cofactor is Zn(2+).

The enzyme catalyses 7-aminomethyl-7-carbaguanine + guanosine(34) in tRNA = 7-aminomethyl-7-carbaguanosine(34) in tRNA + guanine. Its pathway is tRNA modification; tRNA-queuosine biosynthesis. Functionally, catalyzes the base-exchange of a guanine (G) residue with the queuine precursor 7-aminomethyl-7-deazaguanine (PreQ1) at position 34 (anticodon wobble position) in tRNAs with GU(N) anticodons (tRNA-Asp, -Asn, -His and -Tyr). Catalysis occurs through a double-displacement mechanism. The nucleophile active site attacks the C1' of nucleotide 34 to detach the guanine base from the RNA, forming a covalent enzyme-RNA intermediate. The proton acceptor active site deprotonates the incoming PreQ1, allowing a nucleophilic attack on the C1' of the ribose to form the product. After dissociation, two additional enzymatic reactions on the tRNA convert PreQ1 to queuine (Q), resulting in the hypermodified nucleoside queuosine (7-(((4,5-cis-dihydroxy-2-cyclopenten-1-yl)amino)methyl)-7-deazaguanosine). The protein is Queuine tRNA-ribosyltransferase of Psychrobacter cryohalolentis (strain ATCC BAA-1226 / DSM 17306 / VKM B-2378 / K5).